A 332-amino-acid polypeptide reads, in one-letter code: DNA-directed RNA polymerase subunit alpha (332 aa).

The interval Met1 to Thr234 is alpha N-terminal domain (alpha-NTD). Positions Val248–Gly332 are alpha C-terminal domain (alpha-CTD).

This sequence belongs to the RNA polymerase alpha chain family. As to quaternary structure, homodimer. The RNAP catalytic core consists of 2 alpha, 1 beta, 1 beta' and 1 omega subunit. When a sigma factor is associated with the core the holoenzyme is formed, which can initiate transcription.

The catalysed reaction is RNA(n) + a ribonucleoside 5'-triphosphate = RNA(n+1) + diphosphate. Its function is as follows. DNA-dependent RNA polymerase catalyzes the transcription of DNA into RNA using the four ribonucleoside triphosphates as substrates. This Stenotrophomonas maltophilia (strain R551-3) protein is DNA-directed RNA polymerase subunit alpha.